The chain runs to 145 residues: I-leader protein (145 aa).

Its subcellular location is the host cytoplasm. The protein resides in the host perinuclear region. This is I-leader protein from Human adenovirus C serotype 2 (HAdV-2).